Reading from the N-terminus, the 423-residue chain is Transmembrane protein 130 (423 aa).

The signal sequence occupies residues 1–24 (MAQAVWSRLGRILWLSCLLPWAPA). Topologically, residues 25–339 (GVAAGLYELN…IQVWPSRIQP (315 aa)) are extracellular. N-linked (GlcNAc...) asparagine glycans are attached at residues Asn-34, Asn-197, and Asn-300. One can recognise a PKD domain in the interval 147 to 233 (WPSSYLTKTI…AVMQKTGDFS (87 aa)). A helical membrane pass occupies residues 340-360 (AVFAFPCATLITVMLAFIMYM). Residues 361–423 (TLRNATQQKD…LYKSVKTYTV (63 aa)) lie on the Cytoplasmic side of the membrane.

It localises to the golgi apparatus membrane. This is Transmembrane protein 130 (TMEM130) from Pongo abelii (Sumatran orangutan).